We begin with the raw amino-acid sequence, 546 residues long: Probable protein kinase UbiB (546 aa).

In terms of domain architecture, Protein kinase spans 124-502 (DFDIKPLASA…HVRQGQSRYL (379 aa)). ATP is bound by residues 130-138 (LASASIAQV) and Lys-153. Asp-288 functions as the Proton acceptor in the catalytic mechanism. The next 2 helical transmembrane spans lie at 501–521 (YLLGIGATLVLSGTFLLVSRP) and 522–542 (EWGLMPGWLMAAGLVAWFVGW).

The protein belongs to the ABC1 family. UbiB subfamily.

It is found in the cell inner membrane. The protein operates within cofactor biosynthesis; ubiquinone biosynthesis [regulation]. Is probably a protein kinase regulator of UbiI activity which is involved in aerobic coenzyme Q (ubiquinone) biosynthesis. The polypeptide is Probable protein kinase UbiB (Escherichia fergusonii (strain ATCC 35469 / DSM 13698 / CCUG 18766 / IAM 14443 / JCM 21226 / LMG 7866 / NBRC 102419 / NCTC 12128 / CDC 0568-73)).